The following is a 166-amino-acid chain: Protein FAM89A (166 aa).

It belongs to the FAM89 family.

The chain is Protein FAM89A (fam89a) from Xenopus laevis (African clawed frog).